Consider the following 119-residue polypeptide: Acidic phospholipase A2 2 (119 aa).

Disulfide bonds link Cys11-Cys71, Cys26-Cys118, Cys28-Cys44, Cys43-Cys99, Cys50-Cys92, Cys60-Cys85, and Cys78-Cys90. Ca(2+) contacts are provided by Tyr27, Gly29, and Gly31. Residue His47 is part of the active site. Residue Asp48 participates in Ca(2+) binding. Residue Asp93 is part of the active site.

This sequence belongs to the phospholipase A2 family. Group I subfamily. D49 sub-subfamily. As to quaternary structure, homotrimer. Ca(2+) serves as cofactor. Expressed by the venom gland.

The protein resides in the secreted. The catalysed reaction is a 1,2-diacyl-sn-glycero-3-phosphocholine + H2O = a 1-acyl-sn-glycero-3-phosphocholine + a fatty acid + H(+). Functionally, PLA2 catalyzes the calcium-dependent hydrolysis of the 2-acyl groups in 3-sn-phosphoglycerides. The sequence is that of Acidic phospholipase A2 2 from Naja naja (Indian cobra).